Reading from the N-terminus, the 462-residue chain is Phospho-2-dehydro-3-deoxyheptonate aldolase AroG (462 aa).

Position 87 (cysteine 87) interacts with Mn(2+). Phosphoenolpyruvate contacts are provided by residues arginine 126, 283–284, lysine 306, and arginine 337; that span reads ER. Mn(2+)-binding residues include histidine 369, glutamate 411, and aspartate 441.

In terms of assembly, homodimer. Interacts with Rv0948c. Mn(2+) serves as cofactor. Requires Co(2+) as cofactor. Cd(2+) is required as a cofactor.

It catalyses the reaction D-erythrose 4-phosphate + phosphoenolpyruvate + H2O = 7-phospho-2-dehydro-3-deoxy-D-arabino-heptonate + phosphate. The protein operates within metabolic intermediate biosynthesis; chorismate biosynthesis; chorismate from D-erythrose 4-phosphate and phosphoenolpyruvate: step 1/7. Its activity is regulated as follows. Feedback inhibited by tryptophan, tyrosine, phenylalanine and chorismate. In terms of biological role, catalyzes an aldol-like condensation reaction between phosphoenolpyruvate (PEP) and D-erythrose 4-phosphate (E4P) to generate 3-deoxy-D-arabino-heptulosonate 7-phosphate (DAH7P) and inorganic phosphate. The polypeptide is Phospho-2-dehydro-3-deoxyheptonate aldolase AroG (aroG) (Mycobacterium tuberculosis (strain ATCC 25618 / H37Rv)).